The primary structure comprises 60 residues: UPF0434 protein YPA_0693 (60 aa).

Belongs to the UPF0434 family.

This is UPF0434 protein YPA_0693 from Yersinia pestis bv. Antiqua (strain Antiqua).